A 173-amino-acid polypeptide reads, in one-letter code: NADH-ubiquinone oxidoreductase chain 6 (173 aa).

A run of 5 helical transmembrane segments spans residues 1-21 (MTYFVLFLSLCFVLGGLAVAS), 27-47 (YGVVGLVLASVVGCGWLLSLG), 48-68 (VSFVSLVLFMVYLGGMLVVFV), 91-111 (GVSFVGVLVMGLVIGGFIGCL), and 139-159 (CGVGMFLVAGWGLLLTLFVVL).

It belongs to the complex I subunit 6 family.

Its subcellular location is the mitochondrion membrane. The catalysed reaction is a ubiquinone + NADH + 5 H(+)(in) = a ubiquinol + NAD(+) + 4 H(+)(out). In terms of biological role, core subunit of the mitochondrial membrane respiratory chain NADH dehydrogenase (Complex I) that is believed to belong to the minimal assembly required for catalysis. Complex I functions in the transfer of electrons from NADH to the respiratory chain. The immediate electron acceptor for the enzyme is believed to be ubiquinone. The chain is NADH-ubiquinone oxidoreductase chain 6 (MT-ND6) from Fratercula cirrhata (Tufted puffin).